We begin with the raw amino-acid sequence, 179 residues long: GTP-dependent dephospho-CoA kinase (179 aa).

GTP contacts are provided by Asp50, Val51, Val52, Asp69, Lys71, and Glu126.

Belongs to the GTP-dependent DPCK family.

It carries out the reaction 3'-dephospho-CoA + GTP = GDP + CoA + H(+). Its pathway is cofactor biosynthesis; coenzyme A biosynthesis. In terms of biological role, catalyzes the GTP-dependent phosphorylation of the 3'-hydroxyl group of dephosphocoenzyme A to form coenzyme A (CoA). The chain is GTP-dependent dephospho-CoA kinase from Pyrococcus horikoshii (strain ATCC 700860 / DSM 12428 / JCM 9974 / NBRC 100139 / OT-3).